The primary structure comprises 393 residues: Argininosuccinate synthase (393 aa).

Residues 7–15 (AYSGGLDTS) and Ala34 contribute to the ATP site. Positions 85 and 90 each coordinate L-citrulline. Residue Gly115 coordinates ATP. Residues Thr117, Asn121, and Asp122 each coordinate L-aspartate. Position 121 (Asn121) interacts with L-citrulline. Positions 125, 176, 185, 261, and 273 each coordinate L-citrulline.

It belongs to the argininosuccinate synthase family. Type 1 subfamily. In terms of assembly, homotetramer.

Its subcellular location is the cytoplasm. It carries out the reaction L-citrulline + L-aspartate + ATP = 2-(N(omega)-L-arginino)succinate + AMP + diphosphate + H(+). It participates in amino-acid biosynthesis; L-arginine biosynthesis; L-arginine from L-ornithine and carbamoyl phosphate: step 2/3. The protein is Argininosuccinate synthase of Ehrlichia chaffeensis (strain ATCC CRL-10679 / Arkansas).